Reading from the N-terminus, the 549-residue chain is MDSEERSKKRLRLWSRAVVHFSLCFAIGVFAALLPLAATGATSIDSIRASFRPTVAATPPVPELDLLLIVTVTRPDDDDDDGMSQEASLTRLGHTLRLVEPPLLWIVVGAENTTATARAVNALRGTRVMFRHLTYAAENFTGPAGDEVDYQMNVALSHIQLHRLPGVVHFAAASSVYDLRFFQQLRQTRGIAAWPIATVSSADQTVKLEGPTCNSSQITGWYSKDSSSNITETTWDSSSNTTQTTWDSSSNKTQTTTLAALDTNASKQNSSSGPPEINMHAVGFKSSMLWDSERFTRRDNSSTGINQDLIQAVRQMMINDEDKKRGIPSDCSDSQIMLWHLDMPRHTPKIEQATPEKESLTKGDEEESHDMTLDNVVPKTEEHETLEKENLMKGDEKGSHDMMLDNVVAKIEEQETPEKENLTKGEEKESHDMMLDNVVAKIEEQETPEKENLTKGDEKESHDMMLDNVVAKIDEQETTEKESLTKGDEKESHDMMLDNVVAKIEEQETPEKESLTKGDEKETHDMMLDNVVAKIEEQETPEEGKTKEG.

Residues Met1–Arg16 lie on the Cytoplasmic side of the membrane. Residues Ala17–Ala37 form a helical; Signal-anchor for type II membrane protein membrane-spanning segment. Residues Ala38–Gly549 are Lumenal-facing. Asn112, Asn139, Asn214, Asn229, Asn240, Asn251, Asn264, Asn269, and Asn300 each carry an N-linked (GlcNAc...) asparagine glycan. Residues Glu232–Lys252 form a disordered region. A compositionally biased stretch (basic and acidic residues) spans Ile350 to Gly363. Disordered stretches follow at residues Ile350–Met371, Glu413–Asp432, and Lys441–His524. N-linked (GlcNAc...) asparagine glycans are attached at residues Asn421 and Asn452. Basic and acidic residues-rich tracts occupy residues Lys441–Met465, Lys472–Met496, and Lys503–His524.

Belongs to the glycosyltransferase 43 family.

The protein resides in the golgi apparatus membrane. Its function is as follows. Involved in the synthesis of glucuronoxylan hemicellulose in secondary cell walls. This Oryza sativa subsp. japonica (Rice) protein is Probable glucuronosyltransferase Os01g0157700.